Consider the following 913-residue polypeptide: WD repeat-containing protein 44 (913 aa).

The segment covering 1–14 has biased composition (acidic residues); sequence MASESDTEEFYDAP. Residues 1-24 are disordered; that stretch reads MASESDTEEFYDAPEDVHLGGGYP. N-acetylalanine is present on Ala-2. The interval 2–170 is binding activity; that stretch reads ASESDTEEFY…SSTEQLNVLE (169 aa). Residue Ser-3 is modified to Phosphoserine. Residues 9–15 carry the FFAT-like motif motif; it reads EFYDAPE. The residue at position 11 (Tyr-11) is a Phosphotyrosine. Phosphoserine is present on residues Ser-27, Ser-50, Ser-66, Ser-71, Ser-81, Ser-96, and Ser-126. A coiled-coil region spans residues 119-184; sequence EESQKAESQN…VLNKEAVEVK (66 aa). Thr-158 and Thr-219 each carry phosphothreonine. The segment at 205-348 is disordered; it reads AVEEVAPAKP…RPRSNSGREL (144 aa). Positions 211 to 257 are important for interaction with ARHGAP26 AND ARHGAP10; it reads PAKPPRHLTPEPDIVASTKKPVPARPPPPTNFPPPRPPPPSRPAPPP. Pro residues predominate over residues 233–256; the sequence is PARPPPPTNFPPPRPPPPSRPAPP. Residue Ser-262 is modified to Phosphoserine. Positions 262–278 are enriched in basic and acidic residues; the sequence is SELEFETLKTPDIDVPK. Thr-271 is subject to Phosphothreonine. Residues 280–311 are compositionally biased toward polar residues; it reads NITSDSLLTASMASESTVKDSQPSLDLASATS. An important for interaction with RAB11A region spans residues 334 to 347; sequence VMGPQRPRSNSGRE. Phosphoserine; by PKB/AKT1 occurs at positions 342 and 344. Residue Thr-349 is modified to Phosphothreonine. Disordered stretches follow at residues 397 to 424 and 459 to 480; these read SNDAAQSDDEEKLQSQPTDTDGGRLKQK and DEVFHTDQDDPSSSDDEGMPYT. Phosphoserine occurs at positions 403, 470, 471, and 472. A compositionally biased stretch (acidic residues) spans 467-476; the sequence is DDPSSSDDEG. The residue at position 479 (Tyr-479) is a Phosphotyrosine. One copy of the WD 1 repeat lies at 509-548; the sequence is EHMGAVWTMKFSHCGRLLASAGQDNVVRIWALKNAFDYFN. A disordered region spans residues 557-593; the sequence is EGRVSPSPSQESLSSSKSDTDTGVCSGTDEDPDDKNA. Phosphoserine occurs at positions 561 and 565. The span at 561 to 573 shows a compositional bias: low complexity; it reads SPSPSQESLSSSK. WD repeat units lie at residues 605-643, 645-685, 690-729, 740-779, 784-823, and 876-913; these read GHTADLLDLSWSKNYFLLSSSMDKTVRLWHISRRECLCC, QHID…VALW, GQTKLITAANFCQNGKYAVIGTYDGRCIFYDTEHLKYHTQ, KVGRKITGIEPLPGENKILVTSNDSRIRLYDLRDLSLSMK, VNSSSQIKASFSHDFTYLVSGSEDKYVYIWSTYHDLSKFT, and VLDATPSGIMKTDNTEVLLSADFTGAIKVFVNKRKNVS.

In terms of assembly, interacts with the GTP-bound form of RAB11A and RAB11B. Interacts with GRAF1/ARHGAP26 or GRAF2/ARHGAP10; the interaction connects the endoplasmic reticulum (ER) with the endosomal tubule. Interacts (via FFAT-like motif) with VAPA (via MSP domain) or VAPB (via MSP domain); the interaction connects the ER with the endosomal tubule. Does not bind to RAB7, RAB10, RAB14, RAB35 and RAB8A. Post-translationally, phosphorylated by ATK1; the phosphorylation stabilizes its interaction with RAB11A and RAB11B.

The protein resides in the cytoplasm. It localises to the cytosol. Its subcellular location is the perinuclear region. The protein localises to the endosome membrane. It is found in the golgi apparatus. The protein resides in the trans-Golgi network. Downstream effector for Rab11 which regulates Rab11 intracellular membrane trafficking functions such as endocytic recycling, intracellular ciliogenesis and protein export. ATK1-mediated phosphorylation of WDR44 induces binding to Rab11 which activates endocytic recycling of transferrin receptor back to the plasma membrane. When bound to Rab11, prevents the formation of the ciliogenic Rab11-Rabin8/RAB3IP-RAB11FIP3 complex, therefore inhibiting preciliary trafficking and ciliogenesis. Participates in neo-synthesized protein export by connecting the endoplasmic reticulum (ER) with the endosomal tubule via direct interactions with the integral ER proteins VAPA or VAPB and the endosomal protein GRAFs (GRAF1/ARHGAP26 or GRAF2/ARHGAP10), which facilitates the transfer of proteins such as E-cadherin, MPP14 and CFTR into a Rab8-Rab10-Rab11-dependent export route. The sequence is that of WD repeat-containing protein 44 from Homo sapiens (Human).